Consider the following 250-residue polypeptide: Exosome complex component Rrp41 (250 aa).

It belongs to the RNase PH family. Rrp41 subfamily. Component of the archaeal exosome complex. Forms a hexameric ring-like arrangement composed of 3 Rrp41-Rrp42 heterodimers. The hexameric ring associates with a trimer of Rrp4 and/or Csl4 subunits.

The protein localises to the cytoplasm. Its function is as follows. Catalytic component of the exosome, which is a complex involved in RNA degradation. Has 3'-&gt;5' exoribonuclease activity. Can also synthesize heteromeric RNA-tails. The chain is Exosome complex component Rrp41 from Pyrococcus furiosus (strain ATCC 43587 / DSM 3638 / JCM 8422 / Vc1).